The chain runs to 408 residues: UPF0496 protein At5g66670 (408 aa).

The next 2 membrane-spanning stretches (helical) occupy residues 239 to 259 (VVFA…AAMM) and 262 to 282 (PVLS…GMWC).

Belongs to the UPF0496 family.

It localises to the membrane. The protein is UPF0496 protein At5g66670 of Arabidopsis thaliana (Mouse-ear cress).